A 593-amino-acid polypeptide reads, in one-letter code: UvrABC system protein C (593 aa).

Positions 14–91 constitute a GIY-YIG domain; the sequence is DSPGCYLHKD…IQENMPKYNI (78 aa). A UVR domain is found at 196–231; sequence NKIVNGLTEKMKSAAMTMEFERAAEYRDLIEAISLL.

This sequence belongs to the UvrC family. As to quaternary structure, interacts with UvrB in an incision complex.

It localises to the cytoplasm. Its function is as follows. The UvrABC repair system catalyzes the recognition and processing of DNA lesions. UvrC both incises the 5' and 3' sides of the lesion. The N-terminal half is responsible for the 3' incision and the C-terminal half is responsible for the 5' incision. The sequence is that of UvrABC system protein C from Streptococcus agalactiae serotype V (strain ATCC BAA-611 / 2603 V/R).